Reading from the N-terminus, the 108-residue chain is Large ribosomal subunit protein uL24 (108 aa).

It belongs to the universal ribosomal protein uL24 family. As to quaternary structure, part of the 50S ribosomal subunit.

One of two assembly initiator proteins, it binds directly to the 5'-end of the 23S rRNA, where it nucleates assembly of the 50S subunit. Functionally, one of the proteins that surrounds the polypeptide exit tunnel on the outside of the subunit. The polypeptide is Large ribosomal subunit protein uL24 (Pelobacter propionicus (strain DSM 2379 / NBRC 103807 / OttBd1)).